Here is a 134-residue protein sequence, read N- to C-terminus: Acyl-CoA thioester hydrolase YbgC (134 aa).

Aspartate 18 is a catalytic residue.

Belongs to the 4-hydroxybenzoyl-CoA thioesterase family.

The protein resides in the cell inner membrane. Its function is as follows. Thioesterase that appears to be involved in phospholipid metabolism. Some specific acyl-ACPs could be physiological substrates. Displays acyl-CoA thioesterase activity on malonyl-CoA in vitro, catalyzing the hydrolysis of the thioester bond. The chain is Acyl-CoA thioester hydrolase YbgC (ybgC) from Escherichia coli O157:H7.